The chain runs to 1095 residues: Inactive phospholipase C-like protein 1 (1095 aa).

The segment covering methionine 1–proline 11 has biased composition (basic and acidic residues). The disordered stretch occupies residues methionine 1 to serine 61. Phosphoserine occurs at positions 47 and 77. The interaction with PPP1C stretch occupies residues serine 83–valine 222. Threonine 93 is subject to Phosphothreonine; by PKA. Serine 95 is subject to Phosphoserine. Residues serine 113 to serine 223 form the PH domain. A PI-PLC X-box domain is found at glutamine 398 to lysine 542. The segment at lysine 543–arginine 567 is interaction with GABA A beta subunit. At threonine 556 the chain carries Phosphothreonine. Residue serine 569 is modified to Phosphoserine. Positions leucine 585–arginine 701 constitute a PI-PLC Y-box domain. Residues arginine 701–serine 830 form the C2 domain. Coiled-coil stretches lie at residues leucine 894–leucine 914 and leucine 1034–cysteine 1059. Residues lysine 1066–leucine 1095 form a disordered region. The span at alanine 1074–leucine 1095 shows a compositional bias: basic and acidic residues. Phosphoserine is present on serine 1079.

As to quaternary structure, interacts with PPP2CA. Interacts with Ins(1,4,5)P3, Ins(1,4,5,6)P4, GABARAP, GABA receptor beta subunits, GABA receptor gamma-2 subunits and PPP1C. May form a ternary complex with GABA receptor beta subunit and GABARAP. The formation of a ternary complex with GABA receptor beta subunit and GABARAP could be the key step for facilitating the association of GABARAP with the GABA receptor gamma-2 subunit and to allow it to be transported at the right destination. Phosphorylated by the catalytic subunit of PKA. Phosphorylation of Thr-93 resulted in dissociation of PPP1C from PRIP1. As to expression, expressed in a variety of fetal and adult organs including brain, lung and kidney. Its expression was greatly reduced in small and non-small cell lung carcinoma. Isoform 1 is predominantly expressed in brain.

Its subcellular location is the cytoplasm. Involved in an inositol phospholipid-based intracellular signaling cascade. Shows no PLC activity to phosphatidylinositol 4,5-bisphosphate and phosphatidylinositol. Component in the phospho-dependent endocytosis process of GABA A receptor. Regulates the turnover of receptors and thus contributes to the maintenance of GABA-mediated synaptic inhibition. Its aberrant expression could contribute to the genesis and progression of lung carcinoma. Acts as an inhibitor of PPP1C. The polypeptide is Inactive phospholipase C-like protein 1 (PLCL1) (Homo sapiens (Human)).